Here is a 261-residue protein sequence, read N- to C-terminus: Putative diacylated glycolipid transporter LprF (261 aa).

An N-terminal signal peptide occupies residues 1 to 38 (MNGLISQACGSHRPRRPSSLGAVAILIAATLFATVVAG). Cysteine 39 is lipidated: N-palmitoyl cysteine. Cysteine 39 is lipidated: S-diacylglycerol cysteine. Positions 42 to 61 (KPTTASSPSPGSPSPEAQQI) are disordered.

It belongs to the LppX/LprAFG lipoprotein family. As to quaternary structure, monomer. Post-translationally, modified by Lgt on Cys-39 with an S-linked diacylglycerol with a mixture of C16, C18 and C19 fatty acids (palmitic, stearic and tuberculostearic acid respectively), signal peptide is removed by LspA, modified by Lnt with an amide-linked mixture of C16 and C19 fatty acids.

It is found in the cell membrane. Functionally, might be involved in transporting short diacylated glycolipids to the cell outer membrane. Binds glycolipids that contain a diacylated glycerophosphate or a diacylated phosphatidylinositol moiety with C14 and C16 chains (upon overexpression in M.smegmatis; M.smegmatis does not encode this gene). Overexpression in M.smegmatis increases the cell wall glycolipid LAM/LM ratio (lipoarabinomannan/lipomannan), suggesting perhaps this protein is involved in the preferential translocation of diacylated LAM to the outer cell membrane. Overexpressing M.smegmatis cells adhere less well to hexadecane droplets, indicating decrease in the hydrophobicity of the cell surface, and have a slightly increased resistance to the antibiotic ethambutol. The polypeptide is Putative diacylated glycolipid transporter LprF (lprF) (Mycobacterium bovis (strain ATCC BAA-935 / AF2122/97)).